We begin with the raw amino-acid sequence, 683 residues long: Eukaryotic translation initiation factor 3 subunit B (683 aa).

The segment at 1-25 is disordered; that stretch reads MAKKKGEEQDFEEEPNFDDPEGFVD. A compositionally biased stretch (acidic residues) spans 9–25; that stretch reads QDFEEEPNFDDPEGFVD. The 85-residue stretch at 49–133 folds into the RRM domain; sequence NVIVVDNIPV…YTLLVNRFAD (85 aa). 6 WD repeats span residues 199-238, 240-279, 283-321, 324-359, 435-477, and 522-567; these read KRER…KVNK, AHSN…EKRT, DGMS…LLDM, IRVE…TLMA, EVKE…EPVL, and GDHY…KRVN. A coiled-coil region spans residues 611–638; that stretch reads MTRASKELIEKRAKLREQFTEYRSKRVK.

The protein belongs to the eIF-3 subunit B family. In terms of assembly, component of the eukaryotic translation initiation factor 3 (eIF-3) complex.

Its subcellular location is the cytoplasm. Its function is as follows. RNA-binding component of the eukaryotic translation initiation factor 3 (eIF-3) complex, which is involved in protein synthesis of a specialized repertoire of mRNAs and, together with other initiation factors, stimulates binding of mRNA and methionyl-tRNAi to the 40S ribosome. The eIF-3 complex specifically targets and initiates translation of a subset of mRNAs involved in cell proliferation. This is Eukaryotic translation initiation factor 3 subunit B from Anopheles gambiae (African malaria mosquito).